The primary structure comprises 370 residues: Vasopressin V2 receptor (370 aa).

The interval 1–28 (MLRATTSAVPRALSWPAAPGNGSEREPL) is disordered. Residues 1–37 (MLRATTSAVPRALSWPAAPGNGSEREPLDDRDPLLAR) lie on the Extracellular side of the membrane. Residue asparagine 21 is glycosylated (N-linked (GlcNAc...) asparagine). The chain crosses the membrane as a helical span at residues 38 to 62 (VELALLSTVFVAVALSNGLVLGALV). Over 63–76 (RRGRRGRWAPMHVF) the chain is Cytoplasmic. A helical membrane pass occupies residues 77-97 (IGHLCLADLAVALFQVLPQLA). The Extracellular segment spans residues 98–112 (WDATYRFRGPDALCR). The helical transmembrane segment at 113–134 (AVKYLQMVGMYASSYMILAMTL) threads the bilayer. Residues 135–158 (DRHRAICRPMLAYRHGGGARWNRP) are Cytoplasmic-facing. Residues 159–179 (VLVAWAFSLLLSLPQLFIFAQ) traverse the membrane as a helical segment. Residues 180 to 199 (RDVGDGSGVLDCWASFAEPW) are Extracellular-facing. Residues 200–219 (GLRAYVTWIALMVFVAPALG) traverse the membrane as a helical segment. The Cytoplasmic segment spans residues 220 to 270 (IAACQVLIFREIHTSLVPGPAERAGGHRGGRRAGSPREGARVSAAMAKTAR). A helical transmembrane segment spans residues 271–292 (MTLVIVAVYVLCWAPFFLVQLW). Residues 293–307 (SVWDPKAPREGPPFV) are Extracellular-facing. Residues 308 to 327 (LLMLLASLNSCTNPWIYASF) traverse the membrane as a helical segment. Residues 328–370 (SSSISSELRSLLCCPRRRTPPSLRPQEESCATASSFSARDTSS) lie on the Cytoplasmic side of the membrane. S-palmitoyl cysteine attachment occurs at residues cysteine 340 and cysteine 341. The interval 347 to 370 (PPSLRPQEESCATASSFSARDTSS) is disordered. The segment covering 356-370 (SCATASSFSARDTSS) has biased composition (polar residues).

It belongs to the G-protein coupled receptor 1 family. Vasopressin/oxytocin receptor subfamily. Interacts with ARRDC4. Identified in a complex containing at least ARRDC4, V2R and HGS. Interacts with TMEM147.

It localises to the cell membrane. In terms of biological role, receptor for arginine vasopressin. The activity of this receptor is mediated by G proteins which activate adenylate cyclase. Involved in renal water reabsorption. The chain is Vasopressin V2 receptor (AVPR2) from Sus scrofa (Pig).